Reading from the N-terminus, the 803-residue chain is Volume-regulated anion channel subunit LRRC8C (803 aa).

Topologically, residues 1 to 22 are cytoplasmic; sequence MIPVTEFRQFSEQQPAFRVLKP. Residues 23-48 form a helical membrane-spanning segment; it reads WWDVFTDYLSVAMLMIGVFGCTLQVM. The Extracellular portion of the chain corresponds to 49-124; the sequence is QDKIICLPKR…CYERALHWYA (76 aa). Cystine bridges form between Cys54/Cys308 and Cys115/Cys293. The chain crosses the membrane as a helical span at residues 125–144; that stretch reads KYFPYLVLIHTLVFMLCSNF. The Cytoplasmic segment spans residues 145 to 262; the sequence is WFKFPGSSSK…EEGDILYAMY (118 aa). Residues 177 to 206 form a disordered region; that stretch reads EVSGEDSEEKDNRKNNMNRSGTIQSGPEGN. The span at 191 to 206 shows a compositional bias: polar residues; sequence NNMNRSGTIQSGPEGN. Residues Ser212 and Ser215 each carry the phosphoserine modification. A helical transmembrane segment spans residues 263–284; it reads VRQTVLKVIKFLIIIAYNSALV. Over 285-314 the chain is Extracellular; the sequence is SKVQFTVDCNVDIQDMTGYKNFSCNHTMAH. The chain crosses the membrane as a helical span at residues 315–339; sequence LFSKLSFCYLCFVSIYGLTCLYTLY. Over 340 to 803 the chain is Cytoplasmic; it reads WLFYRSLREY…SDVREQMKAD (464 aa). 17 LRR repeats span residues 409–420, 421–443, 446–466, 467–488, 490–513, 515–537, 541–563, 566–586, 588–611, 613–635, 637–659, 660–682, 684–705, 706–728, 730–751, 752–774, and 776–799; these read WTPDKLRQKLQT, NAHNRLELPLIMLSGLPDTVFEI, LQSLKLEIIKNVMIPATIAQL, DNLQELCLHQCSVKIHSAALSF, KENLKVLSVKFDDMRELPPWMYGL, NLEELYLVGSLSHDISKNVTLES, LKSLKILSIKSNVSKIPQAVVDV, HLQKMCVHNDGTKLVMLNNLK, MTNLTELELVHCDLERIPHAVFSL, SLQELDLKENNLKSIEEIVSFQH, RKLTVLKLWYNSIAYIPEHIKKL, TSLERLFFSHNKVEVLPSHLFLC, KIRYLDLSYNDIRFIPPEIGVL, QSLQYFSITCNKVESLPDELYFC, KLKTLKIGKNSLSVLSPKIGNL, LFLSYLDIKGNHFEVLPPELGDC, and ALKRAGLVVEDALFETLPSDVREQ.

This sequence belongs to the LRRC8 family. In terms of assembly, heterohexamer; oligomerizes with other LRRC8 proteins (LRRC8A, LRRC8B, LRRC8D and/or LRRC8E) to form a heterohexamer. Homoheptamer; inactive, likely because it is not targeted to the plasma membrane in the absence of LRRC8A. In vivo, the subunit composition may depend primarily on expression levels, and heterooligomeric channels containing various proportions of the different LRRC8 proteins may coexist. As to expression, expressed at very low levels in adipose tissue.

Its subcellular location is the cell membrane. The protein localises to the endoplasmic reticulum membrane. The enzyme catalyses chloride(in) = chloride(out). The catalysed reaction is iodide(out) = iodide(in). It catalyses the reaction taurine(out) = taurine(in). It carries out the reaction 2',3'-cGAMP(out) = 2',3'-cGAMP(in). Functionally, non-essential component of the volume-regulated anion channel (VRAC, also named VSOAC channel), an anion channel required to maintain a constant cell volume in response to extracellular or intracellular osmotic changes. The VRAC channel conducts iodide better than chloride and can also conduct organic osmolytes like taurine. Plays a redundant role in the efflux of amino acids, such as aspartate and glutamate, in response to osmotic stress. The VRAC channel also mediates transport of immunoreactive cyclic dinucleotide GMP-AMP (2'-3'-cGAMP), an immune messenger produced in response to DNA virus in the cytosol. Channel activity requires LRRC8A plus at least one other family member (LRRC8B, LRRC8C, LRRC8D or LRRC8E); channel characteristics depend on the precise subunit composition. May play a role in adipogenesis. The sequence is that of Volume-regulated anion channel subunit LRRC8C from Mus musculus (Mouse).